The chain runs to 241 residues: Cytochrome b6-f complex iron-sulfur subunit 2, cyanelle (241 aa).

The N-terminal 62 residues, 1–62 (MSAFACSAVA…AAKATTFSIS (62 aa)), are a transit peptide targeting the cyanelle. The chain crosses the membrane as a helical span at residues 83-103 (LLGAIAGPTIGAGGPFVSFLV). Positions 127–223 (VEKWLETXKP…VNVLEDGVVA (97 aa)) constitute a Rieske domain. [2Fe-2S] cluster contacts are provided by Cys-169, His-171, Cys-187, and His-190. A disulfide bridge links Cys-174 with Cys-189.

This sequence belongs to the Rieske iron-sulfur protein family. The 4 large subunits of the cytochrome b6-f complex are cytochrome b6, subunit IV (17 kDa polypeptide, petD), cytochrome f and the Rieske protein, while the 4 small subunits are petG, petL, petM and petN. The complex functions as a dimer. [2Fe-2S] cluster serves as cofactor.

It is found in the plastid. It localises to the cyanelle thylakoid membrane. It catalyses the reaction 2 oxidized [plastocyanin] + a plastoquinol + 2 H(+)(in) = 2 reduced [plastocyanin] + a plastoquinone + 4 H(+)(out). Functionally, component of the cytochrome b6-f complex, which mediates electron transfer between photosystem II (PSII) and photosystem I (PSI), cyclic electron flow around PSI, and state transitions. The sequence is that of Cytochrome b6-f complex iron-sulfur subunit 2, cyanelle (petC-2) from Cyanophora paradoxa.